The sequence spans 559 residues: Laccase-7 (559 aa).

The N-terminal stretch at 1 to 28 (MVIPWCSSMMRLLWFLFALLLARSVADA) is a signal peptide. Residues Asn32, Asn47, and Asn82 are each glycosylated (N-linked (GlcNAc...) asparagine). Plastocyanin-like domains follow at residues 36-152 (TVES…PRNG) and 163-316 (EVPI…YNTT). The Cu cation site is built by His86 and His88. Asn112 and Asn120 each carry an N-linked (GlcNAc...) asparagine glycan. His131 and His133 together coordinate Cu cation. Asn151, Asn210, Asn220, Asn257, Asn278, Asn314, Asn363, and Asn443 each carry an N-linked (GlcNAc...) asparagine glycan. The 148-residue stretch at 396–543 (FRLPSQMSLL…GMVFAVDNGT (148 aa)) folds into the Plastocyanin-like 3 domain. Cu cation-binding residues include His461, His464, and His466. Asn484 is a glycosylation site (N-linked (GlcNAc...) asparagine). Residues His522, Cys523, His524, and His528 each coordinate Cu cation. Asn541 is a glycosylation site (N-linked (GlcNAc...) asparagine).

The protein belongs to the multicopper oxidase family. Requires Cu cation as cofactor.

The protein resides in the secreted. The protein localises to the extracellular space. It is found in the apoplast. The enzyme catalyses 4 hydroquinone + O2 = 4 benzosemiquinone + 2 H2O. Functionally, lignin degradation and detoxification of lignin-derived products. This is Laccase-7 (LAC7) from Oryza sativa subsp. japonica (Rice).